A 486-amino-acid polypeptide reads, in one-letter code: Cardiolipin synthase A (486 aa).

The next 2 helical transmembrane spans lie at 3–23 and 38–58; these read TVYT…IAGV and MAWL…YLAV. 2 consecutive PLD phosphodiesterase domains span residues 219-246 and 399-426; these read MDLR…VDPR and EGGL…DMRS. Active-site residues include His224, Lys226, Asp231, His404, Lys406, and Asp411.

Belongs to the phospholipase D family. Cardiolipin synthase subfamily. ClsA sub-subfamily.

Its subcellular location is the cell inner membrane. The enzyme catalyses 2 a 1,2-diacyl-sn-glycero-3-phospho-(1'-sn-glycerol) = a cardiolipin + glycerol. In terms of biological role, catalyzes the reversible phosphatidyl group transfer from one phosphatidylglycerol molecule to another to form cardiolipin (CL) (diphosphatidylglycerol) and glycerol. The chain is Cardiolipin synthase A from Shigella flexneri.